Consider the following 968-residue polypeptide: RNA polymerase-associated protein RapA (968 aa).

In terms of domain architecture, Helicase ATP-binding spans Asp-164–Asn-334. ATP is bound at residue Asp-177 to Thr-184. The DEAH box signature appears at Asp-280 to His-283. One can recognise a Helicase C-terminal domain in the interval Arg-490–Asp-644.

This sequence belongs to the SNF2/RAD54 helicase family. RapA subfamily. Interacts with the RNAP. Has a higher affinity for the core RNAP than for the holoenzyme. Its ATPase activity is stimulated by binding to RNAP.

In terms of biological role, transcription regulator that activates transcription by stimulating RNA polymerase (RNAP) recycling in case of stress conditions such as supercoiled DNA or high salt concentrations. Probably acts by releasing the RNAP, when it is trapped or immobilized on tightly supercoiled DNA. Does not activate transcription on linear DNA. Probably not involved in DNA repair. This chain is RNA polymerase-associated protein RapA, found in Klebsiella pneumoniae subsp. pneumoniae (strain ATCC 700721 / MGH 78578).